A 374-amino-acid chain; its full sequence is MSNVQSQSNSHHPVHNIVNRSPTSRSEQQIRSIPPTNNNNNNNNNSINNINNNTQRQPLNNNNNNNNNINRNNSNLYPSYADQPDILRSSQKDEYYKKLFEDQCFEMLTRITGPRFIMNRQSESKLLANTIYYLLTTMIGSQTLGEEYCNLRKIKDKTFSIPSIPDRIKLYFFHLLAPYLIKKSLPKLFQRHPKLYILKEIFPKFERLHLALFYFNGSYFEFSKRLSDIRYIFNRKIDQKRPKYDILGLLIIIQILLSTFMYLKENSFFLKQQQKDGGCNGDGEEDNQDLNKDIKIEQVDSVINNNNQDQNNNQEEEEEQKCTLCLEVRTHTTATICGHLFCWHCITEWCNNKEQCPVCRCPISIRTCVPLYNY.

Polar residues-rich tracts occupy residues 1–11 and 18–31; these read MSNVQSQSNSH and VNRS…QQIR. Residues 1–82 are Peroxisomal matrix-facing; that stretch reads MSNVQSQSNS…NSNLYPSYAD (82 aa). The segment at 1 to 82 is disordered; it reads MSNVQSQSNS…NSNLYPSYAD (82 aa). Over residues 35 to 76 the composition is skewed to low complexity; that stretch reads PTNNNNNNNNNSINNINNNTQRQPLNNNNNNNNNINRNNSNL. The chain crosses the membrane as a helical span at residues 83 to 112; that stretch reads QPDILRSSQKDEYYKKLFEDQCFEMLTRIT. Position 113 (G113) is a topological domain, cytoplasmic. Residues 114–135 traverse the membrane as a helical segment; that stretch reads PRFIMNRQSESKLLANTIYYLL. The Peroxisomal matrix portion of the chain corresponds to 136 to 165; the sequence is TTMIGSQTLGEEYCNLRKIKDKTFSIPSIP. The chain crosses the membrane as a helical span at residues 166–181; it reads DRIKLYFFHLLAPYLI. Topologically, residues 182 to 192 are cytoplasmic; sequence KKSLPKLFQRH. The chain crosses the membrane as a helical span at residues 193-216; it reads PKLYILKEIFPKFERLHLALFYFN. The Peroxisomal matrix segment spans residues 217–243; sequence GSYFEFSKRLSDIRYIFNRKIDQKRPK. Residues 244 to 263 traverse the membrane as a helical segment; sequence YDILGLLIIIQILLSTFMYL. Residues 264–374 are Cytoplasmic-facing; that stretch reads KENSFFLKQQ…IRTCVPLYNY (111 aa). 8 residues coordinate Zn(2+): C322, C325, C337, H339, C342, C345, C356, and C359. The RING-type zinc-finger motif lies at 322–360; it reads CTLCLEVRTHTTATICGHLFCWHCITEWCNNKEQCPVCR.

Belongs to the pex2/pex10/pex12 family. As to quaternary structure, component of the PEX2-PEX10-PEX12 retrotranslocation channel.

It is found in the peroxisome membrane. The enzyme catalyses S-ubiquitinyl-[E2 ubiquitin-conjugating enzyme]-L-cysteine + [acceptor protein]-L-lysine = [E2 ubiquitin-conjugating enzyme]-L-cysteine + N(6)-ubiquitinyl-[acceptor protein]-L-lysine.. Its pathway is protein modification; protein ubiquitination. Its activity is regulated as follows. The E3 ubiquitin-protein ligase activity is stimulated by PEX12. Its function is as follows. E3 ubiquitin-protein ligase component of a retrotranslocation channel required for peroxisome organization by mediating export of the PEX5 receptor from peroxisomes to the cytosol, thereby promoting PEX5 recycling. The retrotranslocation channel is composed of PEX2, PEX10 and PEX12; each subunit contributing transmembrane segments that coassemble into an open channel that specifically allows the passage of PEX5 through the peroxisomal membrane. PEX10 also regulates PEX5 recycling by acting as a E3 ubiquitin-protein ligase. When PEX5 recycling is compromised, PEX10 catalyzes polyubiquitination of PEX5 during its passage through the retrotranslocation channel, leading to its degradation. The chain is Peroxisome biogenesis factor 10 (pex10) from Dictyostelium discoideum (Social amoeba).